We begin with the raw amino-acid sequence, 199 residues long: Cytochrome c oxidase subunit 2 (199 aa).

The helical transmembrane segment at 1 to 13 (AICSLVLYLLSLM) threads the bilayer. Residues 14-26 (LMEKLSSNTVDAQ) lie on the Mitochondrial matrix side of the membrane. The chain crosses the membrane as a helical span at residues 27 to 54 (EVELIWTILPAIVLILLALPSLQILYMM). Residues 55–199 (DEIDEPDLTL…SSLLSSSSSL (145 aa)) are Mitochondrial intermembrane-facing. Cu cation contacts are provided by His-128, Cys-163, Glu-165, Cys-167, His-171, and Met-174. Position 165 (Glu-165) interacts with Mg(2+).

This sequence belongs to the cytochrome c oxidase subunit 2 family. In terms of assembly, component of the cytochrome c oxidase (complex IV, CIV), a multisubunit enzyme composed of 14 subunits. The complex is composed of a catalytic core of 3 subunits MT-CO1, MT-CO2 and MT-CO3, encoded in the mitochondrial DNA, and 11 supernumerary subunits COX4I, COX5A, COX5B, COX6A, COX6B, COX6C, COX7A, COX7B, COX7C, COX8 and NDUFA4, which are encoded in the nuclear genome. The complex exists as a monomer or a dimer and forms supercomplexes (SCs) in the inner mitochondrial membrane with NADH-ubiquinone oxidoreductase (complex I, CI) and ubiquinol-cytochrome c oxidoreductase (cytochrome b-c1 complex, complex III, CIII), resulting in different assemblies (supercomplex SCI(1)III(2)IV(1) and megacomplex MCI(2)III(2)IV(2)). Found in a complex with TMEM177, COA6, COX18, COX20, SCO1 and SCO2. Interacts with TMEM177 in a COX20-dependent manner. Interacts with COX20. Interacts with COX16. The cofactor is Cu cation.

The protein localises to the mitochondrion inner membrane. The enzyme catalyses 4 Fe(II)-[cytochrome c] + O2 + 8 H(+)(in) = 4 Fe(III)-[cytochrome c] + 2 H2O + 4 H(+)(out). Its function is as follows. Component of the cytochrome c oxidase, the last enzyme in the mitochondrial electron transport chain which drives oxidative phosphorylation. The respiratory chain contains 3 multisubunit complexes succinate dehydrogenase (complex II, CII), ubiquinol-cytochrome c oxidoreductase (cytochrome b-c1 complex, complex III, CIII) and cytochrome c oxidase (complex IV, CIV), that cooperate to transfer electrons derived from NADH and succinate to molecular oxygen, creating an electrochemical gradient over the inner membrane that drives transmembrane transport and the ATP synthase. Cytochrome c oxidase is the component of the respiratory chain that catalyzes the reduction of oxygen to water. Electrons originating from reduced cytochrome c in the intermembrane space (IMS) are transferred via the dinuclear copper A center (CU(A)) of subunit 2 and heme A of subunit 1 to the active site in subunit 1, a binuclear center (BNC) formed by heme A3 and copper B (CU(B)). The BNC reduces molecular oxygen to 2 water molecules using 4 electrons from cytochrome c in the IMS and 4 protons from the mitochondrial matrix. The sequence is that of Cytochrome c oxidase subunit 2 (MT-CO2) from Rhea americana (Greater rhea).